The primary structure comprises 216 residues: Uracil phosphoribosyltransferase (216 aa).

CTP is bound by residues 29-30 and Arg-37; that span reads RK. Position 30 to 34 (30 to 34) interacts with GTP; the sequence is KNLVR. Arg-80 is a 5-phospho-alpha-D-ribose 1-diphosphate binding site. 87–96 contacts CTP; that stretch reads EGLLKAFPKA. 5-phospho-alpha-D-ribose 1-diphosphate is bound by residues Arg-105 and 140–148; that span reads DPMIATAST. Uracil is bound by residues Ile-203 and 208-210; that span reads GDA. Asp-209 lines the 5-phospho-alpha-D-ribose 1-diphosphate pocket.

Belongs to the UPRTase family. In terms of assembly, homotetramer. Mg(2+) is required as a cofactor.

It catalyses the reaction UMP + diphosphate = 5-phospho-alpha-D-ribose 1-diphosphate + uracil. The protein operates within pyrimidine metabolism; UMP biosynthesis via salvage pathway; UMP from uracil: step 1/1. With respect to regulation, allosterically activated by GTP. Inhibited by CTP and UMP in combination. Functionally, catalyzes the conversion of uracil and 5-phospho-alpha-D-ribose 1-diphosphate (PRPP) to UMP and diphosphate. The chain is Uracil phosphoribosyltransferase (upp) from Saccharolobus solfataricus (strain ATCC 35092 / DSM 1617 / JCM 11322 / P2) (Sulfolobus solfataricus).